The chain runs to 92 residues: Non-specific lipid-transfer protein 1 (92 aa).

4 disulfide bridges follow: Cys-4–Cys-52, Cys-14–Cys-28, Cys-29–Cys-74, and Cys-50–Cys-88.

This sequence belongs to the plant LTP family. In terms of tissue distribution, expressed in seeds and, at very low levels, in pulp of fruit (at protein level).

In terms of biological role, plant non-specific lipid-transfer proteins transfer phospholipids as well as galactolipids across membranes. May play a role in wax or cutin deposition in the cell walls of expanding epidermal cells and certain secretory tissues. The chain is Non-specific lipid-transfer protein 1 from Actinidia deliciosa (Kiwi).